Reading from the N-terminus, the 442-residue chain is 3-phosphoshikimate 1-carboxyvinyltransferase (442 aa).

3-phosphoshikimate contacts are provided by Lys-23, Ser-24, and Arg-28. Residue Lys-23 coordinates phosphoenolpyruvate. Positions 95 and 123 each coordinate phosphoenolpyruvate. Ser-167, Gln-169, Asp-315, and Lys-342 together coordinate 3-phosphoshikimate. Gln-169 contacts phosphoenolpyruvate. Asp-315 (proton acceptor) is an active-site residue. Arg-346 and Arg-390 together coordinate phosphoenolpyruvate.

This sequence belongs to the EPSP synthase family. In terms of assembly, monomer.

The protein localises to the cytoplasm. The enzyme catalyses 3-phosphoshikimate + phosphoenolpyruvate = 5-O-(1-carboxyvinyl)-3-phosphoshikimate + phosphate. It functions in the pathway metabolic intermediate biosynthesis; chorismate biosynthesis; chorismate from D-erythrose 4-phosphate and phosphoenolpyruvate: step 6/7. In terms of biological role, catalyzes the transfer of the enolpyruvyl moiety of phosphoenolpyruvate (PEP) to the 5-hydroxyl of shikimate-3-phosphate (S3P) to produce enolpyruvyl shikimate-3-phosphate and inorganic phosphate. The protein is 3-phosphoshikimate 1-carboxyvinyltransferase of Dichelobacter nodosus (strain VCS1703A).